The following is a 411-amino-acid chain: MNALAATNRNFKLASRLLGLDSKLEKSLLIPFREIKVECTIPKDDGTLASFVGFRVQHDNARGPMKGGIRYHPEVEPDEVNALAQLMTWKTAVAKIPYGGAKGGIGCDPSELSLSELERLTRVFTQKIHDLIGIHTDVPAPDMGTGPQTMAWILDEYSKFHGHSPAVVTGKPIDLGGSLGRDAATGRGVLFATEALLNEHGKTISGQRFAIQGFGNVGSWAAKLISDKGGKIVAVSDVTGAIKNNNGIDILSLLEHAEENRGIKGFDGADSIDPDSILVEDCDILVPAALGGVINRENANEIKAKFIIEGANHPTDPEADEILKKKGVMILPDIYANSGGVTVSYFEWVQNIQGFMWDEEKVNRELKTYMTRGFKDLKEMCQTHSCDLRMGAFTLGINRVAQATTIRGWGS.

The active site involves K102.

Belongs to the Glu/Leu/Phe/Val dehydrogenases family.

The enzyme catalyses L-glutamate + NAD(+) + H2O = 2-oxoglutarate + NH4(+) + NADH + H(+). The catalysed reaction is L-glutamate + NADP(+) + H2O = 2-oxoglutarate + NH4(+) + NADPH + H(+). This chain is Probable glutamate dehydrogenase 3 (GSH3), found in Arabidopsis thaliana (Mouse-ear cress).